Here is a 405-residue protein sequence, read N- to C-terminus: Zinc finger protein ubi-d4 (405 aa).

Disordered regions lie at residues 80 to 147, 165 to 194, 210 to 230, and 248 to 280; these read RKKR…GEFP, DDLD…GGAR, ACDN…VCGK, and AEEE…PDGL. Basic and acidic residues-rich tracts occupy residues 100-110 and 126-140; these read PDTDQTLKKEG and DPLE…RMDD. Acidic residues predominate over residues 165–174; sequence DDLDDEDYEE. Residues 209–246 form a C2H2-type; atypical zinc finger; the sequence is YACDNSYKQKHSLKPPDRVCGKRYKNRPGLSYHYAHSH. Over residues 267–277 the composition is skewed to basic and acidic residues; it reads RSEEQKSKKGP. 2 consecutive PHD-type zinc fingers follow at residues 284 to 344 and 341 to 391; these read NNYC…CKCC and CKCC…CLDL.

Belongs to the requiem/DPF family.

It is found in the cytoplasm. The protein resides in the nucleus. May be a transcription factor required for the apoptosis response following survival factor withdrawal from myeloid cells. Might also have a role in the development and maturation of lymphoid cells. The sequence is that of Zinc finger protein ubi-d4 (REQ) from Gallus gallus (Chicken).